A 481-amino-acid polypeptide reads, in one-letter code: Phloretin 4'-O-glucosyltransferase (481 aa).

The active-site Proton acceptor is histidine 16. Histidine 16 lines the an anthocyanidin pocket. Residues glutamine 354, histidine 369, tryptophan 372, asparagine 373, serine 374, glutamate 377, aspartate 393, and glutamine 394 each contribute to the UDP-alpha-D-glucose site.

The protein belongs to the UDP-glycosyltransferase family. In terms of tissue distribution, highly expressed in young leaves, at intermediate level in mature leaves and at low levels in flowers and fruits.

It carries out the reaction phloretin + UDP-alpha-D-glucose = trilobatin + UDP + H(+). The catalysed reaction is (2S)-naringenin + UDP-alpha-D-glucose = (2S)-naringenin 7-O-beta-D-glucoside + UDP + H(+). Glycosyltransferase that possesses phloretin 4'-O-glycosyltransferase activity. Converts phloretin to trilobatin (phloretin 4'-O-glucoside), a potential antioxidant. Can convert with low efficiency phlorizin and trilobatin to their corresponding di-O-glucosides. Can convert with low efficiency naringenin to naringenin-7-O-glucoside. Can convert with low efficiency quercetin to quercetin-7-O-glucoside. This is Phloretin 4'-O-glucosyltransferase from Malus domestica (Apple).